A 363-amino-acid polypeptide reads, in one-letter code: Chorismate synthase (363 aa).

Residues arginine 48 and arginine 54 each contribute to the NADP(+) site. Residues 125 to 127 (RSS), 237 to 238 (NA), glycine 277, 292 to 296 (KPTSS), and arginine 318 contribute to the FMN site.

The protein belongs to the chorismate synthase family. As to quaternary structure, homotetramer. FMNH2 serves as cofactor.

The enzyme catalyses 5-O-(1-carboxyvinyl)-3-phosphoshikimate = chorismate + phosphate. The protein operates within metabolic intermediate biosynthesis; chorismate biosynthesis; chorismate from D-erythrose 4-phosphate and phosphoenolpyruvate: step 7/7. In terms of biological role, catalyzes the anti-1,4-elimination of the C-3 phosphate and the C-6 proR hydrogen from 5-enolpyruvylshikimate-3-phosphate (EPSP) to yield chorismate, which is the branch point compound that serves as the starting substrate for the three terminal pathways of aromatic amino acid biosynthesis. This reaction introduces a second double bond into the aromatic ring system. The chain is Chorismate synthase from Pseudomonas fluorescens (strain Pf0-1).